A 300-amino-acid polypeptide reads, in one-letter code: Heme A synthase (300 aa).

Over 1-8 (MLKEKNLK) the chain is Cytoplasmic. Residues 9-29 (WLSLFTTVLMLFVQIGGALVT) form a helical membrane-spanning segment. Over 30–64 (KTGSADGCGSSWPLCHGKFVPTHIPKETLIELAHR) the chain is Extracellular. Cysteines 37 and 44 form a disulfide. Glutamate 60 is an active-site residue. Residue histidine 63 participates in heme o binding. A helical membrane pass occupies residues 65–85 (GVSGLALLSVTWLVILSIKYI). Topologically, residues 86–92 (GHKKETK) are cytoplasmic. A helical transmembrane segment spans residues 93-113 (FLCYMSIGFIFAQALIGAAAV). Over 114-123 (MWQQNGFVLA) the chain is Extracellular. The helical transmembrane segment at 124–144 (LHFGISLISFSAVFLLTLLIF) threads the bilayer. Histidine 125 provides a ligand contact to heme o. Over 145-163 (EVDQKFDATKLILQPKLRR) the chain is Cytoplasmic. Residues 164–184 (HTIGLTSFIYFVIYSGALVRH) form a helical membrane-spanning segment. The Extracellular segment spans residues 185 to 218 (EKASLACSSWPLCRKGAFILPQNFYEWVQMSHRT). Cysteine 191 and cysteine 197 form a disulfide bridge. Residue histidine 216 participates in heme b binding. Residues 219–239 (LAFILFIWLTYVAFHAMRNYA) traverse the membrane as a helical segment. Residues 240–249 (QYRVIKYGYM) are Cytoplasmic-facing. A helical membrane pass occupies residues 250–270 (IAFILICLQVTTGALTIFTAV). At 271-275 (NLYIA) the chain is on the extracellular side. A helical membrane pass occupies residues 276-296 (LLHALFITLLFGLLCYFILLI). Heme b is bound at residue histidine 278. The Cytoplasmic portion of the chain corresponds to 297–300 (SRAK).

The protein belongs to the COX15/CtaA family. Type 1 subfamily. In terms of assembly, interacts with CtaB. Heme b is required as a cofactor.

It is found in the cell membrane. The enzyme catalyses Fe(II)-heme o + 2 A + H2O = Fe(II)-heme a + 2 AH2. Its pathway is porphyrin-containing compound metabolism; heme A biosynthesis; heme A from heme O: step 1/1. Its function is as follows. Catalyzes the conversion of heme O to heme A by two successive hydroxylations of the methyl group at C8. The first hydroxylation forms heme I, the second hydroxylation results in an unstable dihydroxymethyl group, which spontaneously dehydrates, resulting in the formyl group of heme A. The protein is Heme A synthase of Macrococcus caseolyticus (strain JCSC5402) (Macrococcoides caseolyticum).